We begin with the raw amino-acid sequence, 155 residues long: Microsomal glutathione S-transferase 1 (155 aa).

At 3–9 (DLRQLMD) the chain is on the lumenal side. The chain crosses the membrane as a helical span at residues 10-33 (NEVLMAFTSYATIILTKMMFMSSA). At 34-62 (TAFQRITNKVFANPEDCAGFGKGENAKKF) the chain is on the cytoplasmic side. Residue Arg38 participates in glutathione binding. 3 positions are modified to N6-acetyllysine: Lys42, Lys55, and Lys60. Residues 63–96 (VRTDEKVERVRRAHLNDLENIVPFLGIGLLYSLS) form a helical membrane-spanning segment. 4 residues coordinate glutathione: Arg73, Arg74, His76, and Glu81. Over 97–99 (GPD) the chain is Lumenal. A helical membrane pass occupies residues 100-123 (LSTALMHFRIFVGARIYHTIAYLT). Tyr121 is a binding site for glutathione. The Cytoplasmic segment spans residues 124–128 (PLPQP). The chain crosses the membrane as a helical span at residues 129-148 (NRGLAFFVGYGVTLSMAYRL). Residues 149–155 (LRSRLYL) lie on the Lumenal side of the membrane.

This sequence belongs to the MAPEG family. Homotrimer; The trimer binds only one molecule of glutathione. Post-translationally, acetylation of Lys-42 and Lys-55 is observed in liver mitochondria from fasted mice but not from fed mice. In terms of tissue distribution, expressed in the testes (at protein level).

It localises to the endoplasmic reticulum membrane. The protein localises to the mitochondrion outer membrane. It carries out the reaction RX + glutathione = an S-substituted glutathione + a halide anion + H(+). Its function is as follows. Conjugation of reduced glutathione to a wide number of exogenous and endogenous hydrophobic electrophiles. The chain is Microsomal glutathione S-transferase 1 (Mgst1) from Mus musculus (Mouse).